The sequence spans 478 residues: E3 ubiquitin-protein ligase makorin-1 (478 aa).

3 consecutive C3H1-type zinc fingers follow at residues 51–78, 80–107, and 204–231; these read WTKQVTCRYFMHGVCKKGNNCRYSHDLS, SQSAMVCRYYQRGCCAYGDRCRYEHTKP, and EMKKQLCPYAAVGECRYGENCVYLHGDA. Residues 232 to 259 are makorin-type Cys-His; sequence CDMCGLQVLHPVDAAQRSQHIKSCIEAH. The RING-type zinc-finger motif lies at 277–331; sequence CGICMEVVYEKANPSERRFGILSNCNHTYCLKCIRKWRSAKQFESKIIKSCPECR. Residues 360–389 form a C3H1-type 4 zinc finger; it reads AMSNKPCRYFDEGRGSCPFGGNCFYKHAYP.

Interacts with p53/TP53 and CDKN1A. Interacts with TERT, modulating telomere length homeostasis. In terms of processing, auto-ubiquitinated; which leads to proteasomal degradation.

The enzyme catalyses S-ubiquitinyl-[E2 ubiquitin-conjugating enzyme]-L-cysteine + [acceptor protein]-L-lysine = [E2 ubiquitin-conjugating enzyme]-L-cysteine + N(6)-ubiquitinyl-[acceptor protein]-L-lysine.. Its pathway is protein modification; protein ubiquitination. E3 ubiquitin ligase catalyzing the covalent attachment of ubiquitin moieties onto substrate proteins. These substrates include FILIP1, p53/TP53, CDKN1A and TERT. Keeps cells alive by suppressing p53/TP53 under normal conditions, but stimulates apoptosis by repressing CDKN1A under stress conditions. Acts as a negative regulator of telomerase. Has negative and positive effects on RNA polymerase II-dependent transcription. This is E3 ubiquitin-protein ligase makorin-1 (MKRN1) from Notamacropus eugenii (Tammar wallaby).